We begin with the raw amino-acid sequence, 621 residues long: Phytoene desaturase (621 aa).

Residues 1–23 (MPSTSKRPTAIVIGSGVGGVSTA) form the signal peptide. Residues 394–425 (HASQAHQLSASRNGHISSASPPDQPGLTPTEK) form a disordered region. The span at 397-414 (QAHQLSASRNGHISSASP) shows a compositional bias: polar residues. Residues 598-618 (WEQWVSVLIYLLVGIFAWLWM) form a helical membrane-spanning segment.

It belongs to the carotenoid/retinoid oxidoreductase family. NAD(+) is required as a cofactor.

Its subcellular location is the membrane. It carries out the reaction 15-cis-phytoene + 5 A = all-trans-3,4-didehydrolycopene + 5 AH2. Its pathway is carotenoid biosynthesis; lycopene biosynthesis. In terms of biological role, phytoene desaturase involved in the carotenoid biosynthesis pathway. Converts phytoene into 3,4-didehydrolycopene via the intermediary of phytofluene, zeta-carotene, neurosporene and lycopene, by introducing up to five double bonds into phytoene. In Cercospora nicotianae (Barn spot disease fungus), this protein is Phytoene desaturase (PDH1).